A 280-amino-acid polypeptide reads, in one-letter code: MEPLVAELKQKIEDTLCPFGFEVYPFQVAWYNALLPPAFHLPLPGPTLAFLVLSTPAMFDQALKPFLQSHHLQPLTDPVDQCVAYHLGRVRESLPELQIEVIADYEVHPNRRPKILAQTAAHVAGAAYYYQRQDVESDPWGTQHIAGVCIHPRFGGWFAIRGVVLLRGTEVPNLPPTKPVDCVPTRADRISLLERFNFHWRDWTYRDAVTPQERYSEEQKAYFSTPPAQRLALLGLLQPSEEPSSPSQELHITTLLSKKPQNPRRGWLSPTVSPPISPGP.

Substrate contacts are provided by residues D104, 115–118 (ILAQ), 129–131 (YYQ), C149, and I160. S245, S247, S273, and S277 each carry phosphoserine. Positions 256 to 280 (LSKKPQNPRRGWLSPTVSPPISPGP) are disordered.

The protein belongs to the MMACHC family. In terms of assembly, monomer in the absence of bound substrate. Homodimer; dimerization is triggered by binding to FMN or adenosylcobalamin. Interacts with LMBRD1 and ABCD4; the interaction ensures the transport of cobalamin from the lysosome to the cytoplasm. Forms a multiprotein complex with MMADHC, MTR and MTRR; the interaction with MTR could modulate MMACHC-dependent processing of cobalamin. Heterodimer with MMADHC; the interaction might play a role in the regulation of the balance between AdoCbl and MeCbl synthesis. FAD serves as cofactor. Requires FMN as cofactor.

It is found in the cytoplasm. It localises to the cytosol. It catalyses the reaction 2 cob(II)alamin-[cyanocobalamin reductase] + 2 hydrogen cyanide + NADP(+) = 2 cyanocob(III)alamin + 2 apo-[cyanocobalamin reductase] + NADPH + H(+). The enzyme catalyses apo-[alkylcobalamin reductase] + an R-cob(III)alamin + glutathione = cob(I)alamin-[alkylcobalamin reductase] + an S-substituted glutathione + H(+). It carries out the reaction apo-[alkylcobalamin reductase] + methylcob(III)alamin + glutathione = S-methyl glutathione + cob(I)alamin-[alkylcobalamin reductase] + H(+). The catalysed reaction is apo-[alkylcobalamin reductase] + adenosylcob(III)alamin + glutathione = S-adenosylglutathione + cob(I)alamin-[alkylcobalamin reductase] + H(+). Functionally, cobalamin (vitamin B12) cytosolic chaperone that catalyzes the reductive decyanation of cyanocob(III)alamin (cyanocobalamin, CNCbl) to yield cob(II)alamin and cyanide, using FAD or FMN as cofactors and NADPH as cosubstrate. Cyanocobalamin constitutes the inactive form of vitamin B12 introduced from the diet, and is converted into the active cofactors methylcobalamin (MeCbl) involved in methionine biosynthesis, and 5'-deoxyadenosylcobalamin (AdoCbl) involved in the TCA cycle. Forms a complex with the lysosomal transporter ABCD4 and its chaperone LMBRD1, to transport cobalamin across the lysosomal membrane into the cytosol. The processing of cobalamin in the cytosol occurs in a multiprotein complex composed of at least MMACHC, MMADHC, MTRR (methionine synthase reductase) and MTR (methionine synthase) which may contribute to shuttle safely and efficiently cobalamin towards MTR in order to produce methionine. Also acts as a glutathione transferase by catalyzing the dealkylation of the alkylcob(III)alamins MeCbl and AdoCbl, using the thiolate of glutathione for nucleophilic displacement to generate cob(I)alamin and the corresponding glutathione thioether. The conversion of incoming MeCbl or AdoCbl into a common intermediate cob(I)alamin is necessary to meet the cellular needs for both cofactors. Cysteine and homocysteine cannot substitute for glutathione in this reaction. This chain is Cyanocobalamin reductase / alkylcobalamin dealkylase (MMACHC), found in Bos taurus (Bovine).